The primary structure comprises 491 residues: LETM1 domain-containing protein LETM2, mitochondrial (491 aa).

Residues 1–25 (MAFYSYNSVLAIARTRFPSHFVHPT) constitute a mitochondrion transit peptide. Residues 26–177 (CSSYSPSCAF…LLRTCVDFFR (152 aa)) are Mitochondrial intermembrane-facing. The segment covering 94–109 (EQATKHPQVTSPQATK) has biased composition (polar residues). The disordered stretch occupies residues 94–115 (EQATKHPQVTSPQATKETGMEI). Residues 178–198 (LVPFMVFLIVPFMEFLLPVFL) form a helical membrane-spanning segment. Residues 199–491 (KLFPEMLPST…QNSKASSKGA (293 aa)) lie on the Mitochondrial matrix side of the membrane. Positions 208–235 (TFESESKKEEKQKKKMAVKLELAKFLQE) form a coiled coil. The Letm1 RBD domain occupies 221-438 (KKMAVKLELA…LAPQLKGTKD (218 aa)). Residues 435-491 (GTKDEDFIQPPPVTSSPITPSTPISLPKGPITSSEEPTLQAKSQMTAQNSKASSKGA) are disordered. A compositionally biased stretch (low complexity) spans 449-461 (SSPITPSTPISLP). Over residues 465 to 491 (ITSSEEPTLQAKSQMTAQNSKASSKGA) the composition is skewed to polar residues.

The protein localises to the mitochondrion inner membrane. This chain is LETM1 domain-containing protein LETM2, mitochondrial (LETM2), found in Homo sapiens (Human).